Reading from the N-terminus, the 794-residue chain is DNA ligase (794 aa).

NAD(+)-binding positions include 35-39 (DAEYD), 84-85 (SL), and E126. Catalysis depends on K128, which acts as the N6-AMP-lysine intermediate. The NAD(+) site is built by R149, E186, K302, and K326. The Zn(2+) site is built by C420, C423, C450, and C456. The region spanning 711–794 (VEGLPLAGQT…KLFDEHGVAR (84 aa)) is the BRCT domain.

Belongs to the NAD-dependent DNA ligase family. LigA subfamily. The cofactor is Mg(2+). Mn(2+) is required as a cofactor.

The enzyme catalyses NAD(+) + (deoxyribonucleotide)n-3'-hydroxyl + 5'-phospho-(deoxyribonucleotide)m = (deoxyribonucleotide)n+m + AMP + beta-nicotinamide D-nucleotide.. Functionally, DNA ligase that catalyzes the formation of phosphodiester linkages between 5'-phosphoryl and 3'-hydroxyl groups in double-stranded DNA using NAD as a coenzyme and as the energy source for the reaction. It is essential for DNA replication and repair of damaged DNA. This chain is DNA ligase, found in Pseudomonas aeruginosa (strain LESB58).